The sequence spans 189 residues: Receptor activity-modifying protein 2 (189 aa).

The first 44 residues, 1 to 44 (MAPLRVERAPGGSRLGVTRAQRPTALCLPPLLLLLLLLLGAVSA), serve as a signal peptide directing secretion. Topologically, residues 45 to 157 (SPESLNQSLP…VQPTFSDPPE (113 aa)) are extracellular. Residues 49–61 (LNQSLPESQNQSH) are compositionally biased toward polar residues. Positions 49–69 (LNQSLPESQNQSHPTEDSLVS) are disordered. 4 N-linked (GlcNAc...) asparagine glycosylation sites follow: Asn50, Asn58, Asn99, and Asn144. 2 cysteine pairs are disulfide-bonded: Cys83–Cys113 and Cys98–Cys145. A helical membrane pass occupies residues 158–179 (DVLLAMIIAPICLIPFLVTLVV). At 180 to 189 (WRSKDSDAQA) the chain is on the cytoplasmic side.

Belongs to the RAMP family. Heterodimer of CALCRL and RAMP2; the interaction forms the receptor complex for adrenomedullin/ADM. Heterodimer of CALCR and RAMP2; interaction forms the AMYR2 receptor complex for calcitonin/CALC and amylin/IAPP. As to expression, ubiquitous. Expressed predominantly in embryonic brain, lung and gut and in adult heart, lung, skeletal muscle and brain.

The protein localises to the cell membrane. Functionally, accessory protein that interacts with and modulates the function of G-protein coupled receptors including calcitonin gene-related peptide type 1 receptor (CALCRL) and calcitonin receptor (CALCR). Required for the transport of CALCRL to the plasma membrane. Together with CALCRL, form a receptor complex for adrenomedullin/ADM. Together with CALCR, act as a receptor complex for calcitonin/CT/CALC. Together with CALCR, also act as a receptor complex for amylin/IAPP. In Mus musculus (Mouse), this protein is Receptor activity-modifying protein 2.